A 72-amino-acid chain; its full sequence is Crustacean hyperglycemic hormone (72 aa).

The residue at position 1 (Gln-1) is a Pyrrolidone carboxylic acid. A D-phenylalanine modification is found at Phe-3. 3 disulfide bridges follow: Cys-7–Cys-43, Cys-23–Cys-39, and Cys-26–Cys-52. Val-72 carries the post-translational modification Valine amide.

Produced by the medulla terminalis X-organ in the eyestalks and transported to the sinus gland where they are stored and released.

It localises to the secreted. In terms of biological role, hormone found in the sinus gland of isopods and decapods which controls the blood sugar level. Has a secretagogue action over the amylase released from the midgut gland. May act as a stress hormone and may be involved in the control of molting and reproduction. In Astacus astacus (Noble crayfish), this protein is Crustacean hyperglycemic hormone.